We begin with the raw amino-acid sequence, 122 residues long: Small ribosomal subunit protein uS13 (122 aa).

Positions 91–122 (RHRRGLPVHGQRTKTNARTRKGPKRTVAGKKK) are disordered.

The protein belongs to the universal ribosomal protein uS13 family. Part of the 30S ribosomal subunit. Forms a loose heterodimer with protein S19. Forms two bridges to the 50S subunit in the 70S ribosome.

Located at the top of the head of the 30S subunit, it contacts several helices of the 16S rRNA. In the 70S ribosome it contacts the 23S rRNA (bridge B1a) and protein L5 of the 50S subunit (bridge B1b), connecting the 2 subunits; these bridges are implicated in subunit movement. Contacts the tRNAs in the A and P-sites. The protein is Small ribosomal subunit protein uS13 of Kocuria rhizophila (strain ATCC 9341 / DSM 348 / NBRC 103217 / DC2201).